We begin with the raw amino-acid sequence, 156 residues long: Type IV major fimbrial protein FimA (156 aa).

The propeptide at 1-7 (MKSLQKG) is leader sequence. N-methylphenylalanine is present on F8. A helical transmembrane segment spans residues 8 to 28 (FTLIELMIVVAIIGILAAIAI). 2 cysteine pairs are disulfide-bonded: C57–C67 and C140–C153.

It belongs to the N-Me-Phe pilin family. As to quaternary structure, the pili are polar flexible filaments of about 5.4 nanometers diameter and 2.5 micrometers average length; they consist of only a single polypeptide chain arranged in a helical configuration of five subunits per turn in the assembled pilus.

The protein resides in the fimbrium. The protein localises to the membrane. Functionally, major component of the type IV fimbriae that plays an essential role in twitching motility, natural transformation, and protease secretion. The chain is Type IV major fimbrial protein FimA (fimA) from Dichelobacter nodosus (Bacteroides nodosus).